Reading from the N-terminus, the 616-residue chain is Telomeric repeat-binding factor 2-interacting protein 1 (616 aa).

The 84-residue stretch at 15–98 folds into the BRCT domain; sequence FLDPGGQSMR…QQLDPNDYAI (84 aa). One can recognise a Myb-like domain in the interval 112 to 169; sequence NQGSGRLGYSSEEDAAILKFIEKRQQDAKGNLVWKEMEKRHVTEHSWQSMKDRFLKHL. Positions 174–518 are disordered; that stretch reads ADKPTKKSPI…CSHIRETPEE (345 aa). A compositionally biased stretch (low complexity) spans 232-245; it reads PERASSPPEEPQAA. Polar residues predominate over residues 246–255; sequence GQPSQASSND. Composition is skewed to basic and acidic residues over residues 271 to 288 and 344 to 358; these read ENPR…EHSS and RSSR…RDIP. 2 stretches are compositionally biased toward polar residues: residues 363 to 382 and 397 to 415; these read EQSS…SDSG and NANS…ASTP. The span at 431–444 shows a compositional bias: acidic residues; sequence EDSDVMDDSEECEN. Residues 468–480 show a composition bias toward basic and acidic residues; it reads REPESQAEHHEET. The Nuclear localization signal signature appears at 597 to 613; it reads SKFGEEEVTRRKSFLAT.

It belongs to the RAP1 family. As to quaternary structure, homodimer. Component of the shelterin complex (telosome). Interacts with terf2; the interaction is direct.

It localises to the nucleus. The protein localises to the chromosome. It is found in the telomere. Acts both as a regulator of telomere function and as a transcription regulator. Involved in the regulation of telomere length and protection as a component of the shelterin complex (telosome). Does not bind DNA directly: recruited to telomeric double-stranded 5'-TTAGGG-3' repeats via its interaction with terf2. Independently of its function in telomeres, also acts as a transcription regulator: recruited to extratelomeric 5'-TTAGGG-3' sites via its association with terf2 or other factors, and regulates gene expression. The protein is Telomeric repeat-binding factor 2-interacting protein 1 (terf2ip) of Danio rerio (Zebrafish).